The following is a 331-amino-acid chain: L-lactate dehydrogenase A chain (331 aa).

NAD(+) contacts are provided by residues 29–57 and arginine 98; that span reads GMVG…MEDK. 3 residues coordinate substrate: arginine 105, asparagine 137, and arginine 168. Asparagine 137 is a binding site for NAD(+). The active-site Proton acceptor is histidine 192. Substrate is bound at residue threonine 247.

Belongs to the LDH/MDH superfamily. LDH family. As to quaternary structure, homotetramer.

The protein localises to the cytoplasm. The catalysed reaction is (S)-lactate + NAD(+) = pyruvate + NADH + H(+). The protein operates within fermentation; pyruvate fermentation to lactate; (S)-lactate from pyruvate: step 1/1. Its function is as follows. Interconverts simultaneously and stereospecifically pyruvate and lactate with concomitant interconversion of NADH and NAD(+). The protein is L-lactate dehydrogenase A chain (ldha) of Harpagifer antarcticus (Antarctic spiny plunderfish).